The following is a 187-amino-acid chain: Small ribosomal subunit protein uS7 (187 aa).

This sequence belongs to the universal ribosomal protein uS7 family. In terms of assembly, part of the 30S ribosomal subunit.

Its function is as follows. One of the primary rRNA binding proteins, it binds directly to 16S rRNA where it nucleates assembly of the head domain of the 30S subunit. Is located at the subunit interface close to the decoding center. The polypeptide is Small ribosomal subunit protein uS7 (Picrophilus torridus (strain ATCC 700027 / DSM 9790 / JCM 10055 / NBRC 100828 / KAW 2/3)).